A 190-amino-acid polypeptide reads, in one-letter code: Elongation factor P (190 aa).

It belongs to the elongation factor P family.

It is found in the cytoplasm. It functions in the pathway protein biosynthesis; polypeptide chain elongation. Its function is as follows. Involved in peptide bond synthesis. Stimulates efficient translation and peptide-bond synthesis on native or reconstituted 70S ribosomes in vitro. Probably functions indirectly by altering the affinity of the ribosome for aminoacyl-tRNA, thus increasing their reactivity as acceptors for peptidyl transferase. In Persephonella marina (strain DSM 14350 / EX-H1), this protein is Elongation factor P.